Consider the following 345-residue polypeptide: Selenide, water dikinase (345 aa).

Cysteine 16 is an active-site residue. ATP is bound by residues lysine 19 and 46–48 (TSD). Aspartate 49 is a Mg(2+) binding site. Residues aspartate 66, aspartate 89, and 136-138 (GHT) each bind ATP. Aspartate 89 provides a ligand contact to Mg(2+). Aspartate 224 lines the Mg(2+) pocket.

It belongs to the selenophosphate synthase 1 family. Class I subfamily. In terms of assembly, homodimer. Mg(2+) is required as a cofactor.

It carries out the reaction hydrogenselenide + ATP + H2O = selenophosphate + AMP + phosphate + 2 H(+). Synthesizes selenophosphate from selenide and ATP. This Clostridium botulinum (strain Alaska E43 / Type E3) protein is Selenide, water dikinase.